The sequence spans 186 residues: Potassium-transporting ATPase KdpC subunit (186 aa).

A helical membrane pass occupies residues 10–30 (LTIITMVLCGFLFPLAITLIG).

This sequence belongs to the KdpC family. As to quaternary structure, the system is composed of three essential subunits: KdpA, KdpB and KdpC.

The protein localises to the cell membrane. In terms of biological role, part of the high-affinity ATP-driven potassium transport (or Kdp) system, which catalyzes the hydrolysis of ATP coupled with the electrogenic transport of potassium into the cytoplasm. This subunit acts as a catalytic chaperone that increases the ATP-binding affinity of the ATP-hydrolyzing subunit KdpB by the formation of a transient KdpB/KdpC/ATP ternary complex. The protein is Potassium-transporting ATPase KdpC subunit of Staphylococcus aureus (strain MSSA476).